We begin with the raw amino-acid sequence, 120 residues long: Large ribosomal subunit protein bL12 (120 aa).

It belongs to the bacterial ribosomal protein bL12 family. Homodimer. Part of the ribosomal stalk of the 50S ribosomal subunit. Forms a multimeric L10(L12)X complex, where L10 forms an elongated spine to which 2 to 4 L12 dimers bind in a sequential fashion. Binds GTP-bound translation factors.

Functionally, forms part of the ribosomal stalk which helps the ribosome interact with GTP-bound translation factors. Is thus essential for accurate translation. The chain is Large ribosomal subunit protein bL12 from Brevibacillus brevis (strain 47 / JCM 6285 / NBRC 100599).